The sequence spans 256 residues: Small ribosomal subunit protein bS18m (256 aa).

The interval 19 to 106 (GQRTAQFSTT…GGQRYGSNSQ (88 aa)) is disordered. Positions 21–30 (RTAQFSTTSP) are enriched in polar residues. The segment covering 44-66 (NAPRTNTNTSSPSSNNNNNAGSS) has biased composition (low complexity).

This sequence belongs to the bacterial ribosomal protein bS18 family. Component of the mitochondrial small ribosomal subunit (mt-SSU). Mature N.crassa 74S mitochondrial ribosomes consist of a small (37S) and a large (54S) subunit. The 37S small subunit contains a 16S ribosomal RNA (16S mt-rRNA) and 32 different proteins. The 54S large subunit contains a 23S rRNA (23S mt-rRNA) and 42 different proteins.

The protein resides in the mitochondrion. Component of the mitochondrial ribosome (mitoribosome), a dedicated translation machinery responsible for the synthesis of mitochondrial genome-encoded proteins, including at least some of the essential transmembrane subunits of the mitochondrial respiratory chain. The mitoribosomes are attached to the mitochondrial inner membrane and translation products are cotranslationally integrated into the membrane. The polypeptide is Small ribosomal subunit protein bS18m (rsm18) (Neurospora crassa (strain ATCC 24698 / 74-OR23-1A / CBS 708.71 / DSM 1257 / FGSC 987)).